Here is a 419-residue protein sequence, read N- to C-terminus: Voltage-gated potassium channel subunit beta-1 (419 aa).

A disordered region spans residues 1 to 51 (MLAARTGAAGSQIAEESSKLRKQAAFSGGSKDRSPKKASENVKDSSLSPSG). Residues 30–43 (SKDRSPKKASENVK) are compositionally biased toward basic and acidic residues. Thr-108, Trp-109, Gln-115, and Asp-137 together coordinate NADP(+). Tyr-142 functions as the Proton donor/acceptor in the catalytic mechanism. NADP(+) is bound by residues Asn-210, Ser-240, Arg-241, Gln-266, Trp-295, Ser-296, Pro-297, Leu-298, Ala-299, Cys-300, Lys-306, Arg-316, Gly-375, Ser-377, Gln-381, Glu-384, and Asn-385.

Belongs to the shaker potassium channel beta subunit family. As to quaternary structure, homotetramer. Interaction with tetrameric potassium channel alpha subunits gives rise to a heterooctamer. Identified in potassium channel complexes containing KCNA1, KCNA2, KCNA4, KCNA5, KCNA6, KCNAB1 and KCNAB2. Part of a complex containing KCNA1, KCNA4 and LGI1; interaction with LGI1 inhibits down-regulation of KCNA1 channel activity. Interacts with the dimer formed by GNB1 and GNG2; this enhances KCNA1 binding. Interacts with SQSTM1. In terms of tissue distribution, detected in portal vein myocytes (at protein level).

The protein localises to the cytoplasm. The protein resides in the membrane. It localises to the cell membrane. It catalyses the reaction a primary alcohol + NADP(+) = an aldehyde + NADPH + H(+). The enzyme catalyses a secondary alcohol + NADP(+) = a ketone + NADPH + H(+). Its function is as follows. Regulatory subunit of the voltage-gated potassium (Kv) channels composed of pore-forming and potassium-conducting alpha subunits and of regulatory beta subunits. The beta-1/KCNAB1 cytoplasmic subunit mediates closure of delayed rectifier potassium channels by physically obstructing the pore via its N-terminal domain and increases the speed of channel closure for other family members. Promotes the inactivation of KCNA1, KCNA2, KCNA4, KCNA5 and KCNA6 alpha subunit-containing channels. Displays nicotinamide adenine dinucleotide phosphate (NADPH)-dependent aldoketoreductase activity by catalyzing the NADPH-dependent reduction of a variety of endogenous aldehydes and ketones. The binding of NADPH is required for efficient down-regulation of potassium channel activity. Oxidation of the bound NADPH restrains N-terminal domain from blocking the channel, thereby decreasing N-type inactivation of potassium channel activity. This Oryctolagus cuniculus (Rabbit) protein is Voltage-gated potassium channel subunit beta-1 (KCNAB1).